Reading from the N-terminus, the 283-residue chain is MAEASDLLEWPKKDNRRFLHVVYRVGDLDRTIEFYTEVFGMKLLRKRDIPEEKYSNAFLGFGPETSNFVVELTYNYGVSSYDIGTGFGHFAISTQDVSKLVENVRAKGGNVTREPGPVKGGGSVIAFVKDPDGYTFELIQRGPTPEPFCQVMLRVGDLDRAIKFYEKALGMRLLRKIERPEYKYTIGMMGYAEEYESIVLELTYNYDVTEYTKGNAYAQIAIGTDDVYKSGEVIKIVNQELGGKITREAGPLPGLGTKIVSFLDPDGWKTVLVDNKDFLKELE.

Residue Ala-2 is modified to N-acetylalanine. 2 VOC domains span residues 17 to 141 and 147 to 275; these read RFLH…LIQR and PFCQ…LVDN. Residue His-20 coordinates Zn(2+). Arg-24 provides a ligand contact to substrate. Residue Glu-71 coordinates Zn(2+). 2 residues coordinate substrate: Asn-75 and His-89. Positions 89, 137, and 150 each coordinate Zn(2+). The active-site Proton donor/acceptor is the Glu-137. 2 residues coordinate substrate: Gln-150 and Arg-154. Gln-150 serves as a coordination point for a divalent metal cation. Residue Glu-201 coordinates Zn(2+). Glu-201 contacts a divalent metal cation. Residue Asn-205 participates in substrate binding. Position 219 (Gln-219) interacts with a divalent metal cation. 251 to 252 serves as a coordination point for substrate; it reads PL. Val-271 contributes to the a divalent metal cation binding site.

It belongs to the glyoxalase I family. In terms of assembly, homodimer. Zn(2+) is required as a cofactor. Post-translationally, phosphorylated by SnRK2.8.

The enzyme catalyses (R)-S-lactoylglutathione = methylglyoxal + glutathione. The protein operates within secondary metabolite metabolism; methylglyoxal degradation; (R)-lactate from methylglyoxal: step 1/2. Its function is as follows. Catalyzes the conversion of hemimercaptal, formed from methylglyoxal and glutathione, to S-lactoylglutathione. In Arabidopsis thaliana (Mouse-ear cress), this protein is Lactoylglutathione lyase GLX1.